The sequence spans 330 residues: G-protein coupled receptor 3 (330 aa).

Residues methionine 1 to alanine 42 lie on the Extracellular side of the membrane. Asparagine 20 is a glycosylation site (N-linked (GlcNAc...) asparagine). The helical transmembrane segment at tryptophan 43–valine 62 threads the bilayer. At alanine 63–proline 74 the chain is on the cytoplasmic side. The chain crosses the membrane as a helical span at residues methionine 75–alanine 98. The Extracellular portion of the chain corresponds to alanine 99–leucine 110. A helical membrane pass occupies residues valine 111 to valine 132. The Cytoplasmic portion of the chain corresponds to aspartate 133–threonine 153. Residues tyrosine 154–leucine 173 form a helical membrane-spanning segment. At alanine 174–leucine 198 the chain is on the extracellular side. A helical transmembrane segment spans residues alanine 199 to cysteine 217. The Cytoplasmic segment spans residues arginine 218–glycine 245. Residues isoleucine 246–alanine 272 form a helical membrane-spanning segment. The Extracellular segment spans residues histidine 273 to leucine 277. The helical transmembrane segment at tyrosine 278–phenylalanine 299 threads the bilayer. Residues arginine 300–valine 330 are Cytoplasmic-facing. Cysteine 313 carries the S-palmitoyl cysteine lipid modification. Serine 324, serine 326, and serine 328 each carry phosphoserine.

This sequence belongs to the G-protein coupled receptor 1 family. Expressed predominantly in the central nervous system, and at low levels in the lung, kidney, testis, ovary and eye. Highly expressed in regions of the brain implicated in the Alzheimer disease.

The protein resides in the cell membrane. Its function is as follows. Constitutively active G-protein coupled receptor that maintains high 3'-5'-cyclic adenosine monophosphate (cAMP) levels that a plays a role in serveral processes including meiotic arrest in oocytes or neuronal development via activation of numerous intracellular signaling pathways. Acts as an essential activator of thermogenic adipocytes and drives thermogenesis via its intrinsic G(s)-coupling activity without the requirement of a ligand. Has a potential role in modulating a number of brain functions, including behavioral responses to stress, amyloid-beta peptide generation in neurons. Stimulates neurite outgrowth in cerebellar granular neurons modulated via PKA, ERK, and most strongly PI3K-mediated signaling pathways. In Homo sapiens (Human), this protein is G-protein coupled receptor 3 (GPR3).